An 871-amino-acid polypeptide reads, in one-letter code: DNA mismatch repair protein MutS 1 (871 aa).

614–621 (GPNMSGKS) is a binding site for ATP.

Belongs to the DNA mismatch repair MutS family.

Its function is as follows. This protein is involved in the repair of mismatches in DNA. It is possible that it carries out the mismatch recognition step. This protein has a weak ATPase activity. The polypeptide is DNA mismatch repair protein MutS 1 (Halobacterium salinarum (strain ATCC 29341 / DSM 671 / R1)).